A 242-amino-acid polypeptide reads, in one-letter code: MILLKLYLTLAAILCQSRGMTSLDLDDLMTTNPEIQNEIINKHNDLRRTVDPPAKNMLKMSWDNIIAESAKRAALRCNYKEHTSIAERTIGGVVCGENHFMSSNPRTWSSSIQSWFDERNSFMFGFGPTIPGVMVGHYTQVVWYKSYKVGCAINLCPAQSLKYFQVCQYCPGGNVAGRKYEPYTIGEPCAACPKDCDNGLCTNPCAYNDDYTSCPDLTKQVGCNHPVTANCKASCQCTTEIQ.

The first 19 residues, 1–19 (MILLKLYLTLAAILCQSRG), serve as a signal peptide directing secretion. The SCP domain maps to 41-169 (NKHNDLRRTV…SLKYFQVCQY (129 aa)). Cystine bridges form between cysteine 77/cysteine 156, cysteine 95/cysteine 170, cysteine 151/cysteine 167, cysteine 189/cysteine 196, cysteine 192/cysteine 201, cysteine 205/cysteine 237, cysteine 214/cysteine 231, and cysteine 223/cysteine 235. Positions 205–237 (CAYNDDYTSCPDLTKQVGCNHPVTANCKASCQC) constitute a ShKT domain.

This sequence belongs to the CRISP family. As to expression, expressed by the venom gland.

It localises to the secreted. In terms of biological role, blocks ryanodine receptors, and potassium channels. The chain is Cysteine-rich venom protein VAR11 from Varanus varius (Lace monitor lizard).